The following is a 298-amino-acid chain: Cyclin-D4-2 (298 aa).

The protein belongs to the cyclin family. Cyclin D subfamily. In terms of assembly, interacts with CDKA-1 to form a kinase complex.

Its function is as follows. May promote cell division. The sequence is that of Cyclin-D4-2 (CYCD4-2) from Arabidopsis thaliana (Mouse-ear cress).